We begin with the raw amino-acid sequence, 336 residues long: Biotin synthase (336 aa).

One can recognise a Radical SAM core domain in the interval 57 to 286; it reads HHGKSIDLCS…RAIVRTAGGR (230 aa). Residues cysteine 75, cysteine 79, and cysteine 82 each coordinate [4Fe-4S] cluster. [2Fe-2S] cluster is bound by residues serine 119, cysteine 151, cysteine 211, and arginine 281.

This sequence belongs to the radical SAM superfamily. Biotin synthase family. As to quaternary structure, homodimer. [4Fe-4S] cluster is required as a cofactor. The cofactor is [2Fe-2S] cluster.

It carries out the reaction (4R,5S)-dethiobiotin + (sulfur carrier)-SH + 2 reduced [2Fe-2S]-[ferredoxin] + 2 S-adenosyl-L-methionine = (sulfur carrier)-H + biotin + 2 5'-deoxyadenosine + 2 L-methionine + 2 oxidized [2Fe-2S]-[ferredoxin]. It functions in the pathway cofactor biosynthesis; biotin biosynthesis; biotin from 7,8-diaminononanoate: step 2/2. Catalyzes the conversion of dethiobiotin (DTB) to biotin by the insertion of a sulfur atom into dethiobiotin via a radical-based mechanism. The protein is Biotin synthase of Desulfotalea psychrophila (strain LSv54 / DSM 12343).